A 407-amino-acid chain; its full sequence is Peptidase T (407 aa).

Residue His-82 participates in Zn(2+) binding. Asp-84 is an active-site residue. Residue Asp-143 coordinates Zn(2+). The Proton acceptor role is filled by Glu-177. Positions 178, 200, and 382 each coordinate Zn(2+).

This sequence belongs to the peptidase M20B family. Zn(2+) serves as cofactor.

The protein resides in the cytoplasm. It catalyses the reaction Release of the N-terminal residue from a tripeptide.. In terms of biological role, cleaves the N-terminal amino acid of tripeptides. In Streptococcus pyogenes serotype M3 (strain ATCC BAA-595 / MGAS315), this protein is Peptidase T.